A 572-amino-acid polypeptide reads, in one-letter code: Methionine--tRNA ligase (572 aa).

The 'HIGH' region signature appears at 11 to 21 (PYINGIKHLGN). Residues Cys143, Cys146, Cys156, and Cys159 each coordinate Zn(2+). Positions 346 to 350 (QFSTS) match the 'KMSKS' region motif. An ATP-binding site is contributed by Thr349.

The protein belongs to the class-I aminoacyl-tRNA synthetase family. MetG type 1 subfamily. Monomer. Zn(2+) serves as cofactor.

Its subcellular location is the cytoplasm. The enzyme catalyses tRNA(Met) + L-methionine + ATP = L-methionyl-tRNA(Met) + AMP + diphosphate. Is required not only for elongation of protein synthesis but also for the initiation of all mRNA translation through initiator tRNA(fMet) aminoacylation. The sequence is that of Methionine--tRNA ligase from Roseobacter denitrificans (strain ATCC 33942 / OCh 114) (Erythrobacter sp. (strain OCh 114)).